Here is a 426-residue protein sequence, read N- to C-terminus: Glutamyl-tRNA reductase (426 aa).

Residues 49–52 (TCNR), S109, 114–116 (EGQ), and Q120 each bind substrate. The active-site Nucleophile is C50. 189 to 194 (GAGKMS) contacts NADP(+).

Belongs to the glutamyl-tRNA reductase family. As to quaternary structure, homodimer.

It catalyses the reaction (S)-4-amino-5-oxopentanoate + tRNA(Glu) + NADP(+) = L-glutamyl-tRNA(Glu) + NADPH + H(+). It functions in the pathway porphyrin-containing compound metabolism; protoporphyrin-IX biosynthesis; 5-aminolevulinate from L-glutamyl-tRNA(Glu): step 1/2. Its pathway is porphyrin-containing compound metabolism; chlorophyll biosynthesis. In terms of biological role, catalyzes the NADPH-dependent reduction of glutamyl-tRNA(Glu) to glutamate 1-semialdehyde (GSA). In Thermosynechococcus vestitus (strain NIES-2133 / IAM M-273 / BP-1), this protein is Glutamyl-tRNA reductase.